Consider the following 1071-residue polypeptide: MPRDGNEGMFTIPGFSQIQFEGFCRFVDQGLMEEFHKFPKIEDTDQEIEFQLFVERYQLVEPLIKERDAVYESLTYSSELYVPAGLIWKTGRDMQEQTIFIGNIPLMNSLGTFIVNGIYRIVINQILQSPGIYYRSELDHNGISVYTSTIISDWGGRSELEIDRKSRIWARVSRKQKISILVLSSAMGSNLREILDNVCYPEIFLSFLNDREKKKIGSKENAILEFYQQFACVGGDPVFSESLCKELQKKFFQQRCELGRIGRRNMNRRLNLDIPQSNTFLLPRDVLAAADHLIGMKFGMGTLDDMNHLKNKRIRSVADLLQDQFGLALVRLENAVRGTICGAIRHKLILTPQNLVSSTSLTTTYESFFGLHPLSQVLDRTNPLTQIVHGRKLSYLGPGGLTGRTASFRIRDIHPSHYGRICPIDTSEGINVGLIGSLAIHARIGHWGSIESPFYEVYQRSKETKMVFLSPSRDEYYTVATGNSLALNRGGIQEEQIVPARYRQEFLTIAWEQIHLRSIFPFQYFSIGASLIPFIEHNDANRALMSSNMQRQAVPLSRSXXXXXXXXXXXXAALDSGVSAIAECEGKIIYTDTHKIVLSGHGDTISIPLVMYQRSNKNTCMHQNPQVRRGKCIKKGQILADGAATVGGELALGKNVLVAYMPWEGYNFEDAVLISERLVYEDIYTSFHIRKYEIQTHVTSQGPERITHEIPHLEAHLLRNLDRNGIVALGSWVETGDILVGKLTPQTANESSYAPEDRLLRAILGIQVSTAKETCLKLPIGGRGRVIDVRWIQKKGGSSYNPETIRVYISQKREIKVGDKVAGRHGNKGIISKILSRQDMPYLQDGTPVDMVFNPLGVPSRMNVGQIFECSLGLAGDLLDRHYRIAPFDERYEQEASRKLVFSELYEASKQTANPWVFEPEYPGKSRIFDGRTGDPFEQPVLIGKSYILKLIHQVDDKIHGRSSGHYALVTQQPLRGRAKQGGQRVGEMEVWALEGFGVAHILQEMLTYKSDHIRARQEVLGTTIIGGTIPTPEDAPESFRLLVRELRSLALELNHFLVSEKNFQINRKEA.

This sequence belongs to the RNA polymerase beta chain family. In plastids the minimal PEP RNA polymerase catalytic core is composed of four subunits: alpha, beta, beta', and beta''. When a (nuclear-encoded) sigma factor is associated with the core the holoenzyme is formed, which can initiate transcription.

The protein localises to the plastid. It localises to the chloroplast. The catalysed reaction is RNA(n) + a ribonucleoside 5'-triphosphate = RNA(n+1) + diphosphate. Functionally, DNA-dependent RNA polymerase catalyzes the transcription of DNA into RNA using the four ribonucleoside triphosphates as substrates. This Acorus gramineus (Dwarf sweet flag) protein is DNA-directed RNA polymerase subunit beta.